The sequence spans 73 residues: Copper chaperone ATX1 (73 aa).

Residues 4–68 form the HMA domain; sequence IKHYQFNVVM…KIKKTGKEVR (65 aa). 2 residues coordinate Cu(+): cysteine 15 and cysteine 18.

This sequence belongs to the ATX1 family. In terms of assembly, homodimer. Interacts with CCC2 via the copper anion.

Its subcellular location is the cytoplasm. Its activity is regulated as follows. Tetrathiomolybdate directly and reversibly down-regulates copper delivery to secreted metalloenzymes. Copper homeostasis factor that specifically transports copper to the secretory pathway for incorporation into copper enzymes destined for the cell surface or extracellular milieu. Shuttles copper to the transport ATPase CCC2 on a post-Golgi vesicle for eventual targeting to the cell-surface high-affinity iron uptake protein FET3. Protects against oxygen toxicity. The polypeptide is Copper chaperone ATX1 (Saccharomyces cerevisiae (strain ATCC 204508 / S288c) (Baker's yeast)).